A 294-amino-acid chain; its full sequence is Acetylglutamate kinase (294 aa).

Residues 66–67 (GG), Arg-88, and Asn-193 each bind substrate.

This sequence belongs to the acetylglutamate kinase family. ArgB subfamily.

The protein resides in the cytoplasm. The catalysed reaction is N-acetyl-L-glutamate + ATP = N-acetyl-L-glutamyl 5-phosphate + ADP. It functions in the pathway amino-acid biosynthesis; L-arginine biosynthesis; N(2)-acetyl-L-ornithine from L-glutamate: step 2/4. Its function is as follows. Catalyzes the ATP-dependent phosphorylation of N-acetyl-L-glutamate. The chain is Acetylglutamate kinase from Agrobacterium fabrum (strain C58 / ATCC 33970) (Agrobacterium tumefaciens (strain C58)).